The sequence spans 451 residues: uncharacterized protein (451 aa).

The TRAM domain occupies 2–60 (NLKVKQKIPLKIKRMGINGEGIGFYQKTLVFVPGALKGEDIYCQITSIRRNFVEAKLLK). [4Fe-4S] cluster contacts are provided by Cys-73, Cys-79, Cys-82, and Cys-162. Residues Gln-283, Tyr-312, Asp-333, and Asp-381 each contribute to the S-adenosyl-L-methionine site. The Nucleophile role is filled by Cys-408.

This sequence belongs to the class I-like SAM-binding methyltransferase superfamily. RNA M5U methyltransferase family.

This is an uncharacterized protein from Streptococcus pneumoniae serotype 4 (strain ATCC BAA-334 / TIGR4).